Reading from the N-terminus, the 206-residue chain is High frequency lysogenization protein HflD homolog (206 aa).

The protein belongs to the HflD family.

It is found in the cytoplasm. It localises to the cell inner membrane. The polypeptide is High frequency lysogenization protein HflD homolog (Pseudomonas aeruginosa (strain LESB58)).